Reading from the N-terminus, the 343-residue chain is 3-dehydroquinate synthase (343 aa).

NAD(+) is bound by residues 61–66 (SGEKYK), 95–99 (GVISD), 119–120 (TT), K132, K141, and 159–162 (FLKT). Residues E174, H231, and H248 each coordinate Zn(2+).

The protein belongs to the sugar phosphate cyclases superfamily. Dehydroquinate synthase family. It depends on Co(2+) as a cofactor. Zn(2+) serves as cofactor. The cofactor is NAD(+).

The protein localises to the cytoplasm. It catalyses the reaction 7-phospho-2-dehydro-3-deoxy-D-arabino-heptonate = 3-dehydroquinate + phosphate. Its pathway is metabolic intermediate biosynthesis; chorismate biosynthesis; chorismate from D-erythrose 4-phosphate and phosphoenolpyruvate: step 2/7. In terms of biological role, catalyzes the conversion of 3-deoxy-D-arabino-heptulosonate 7-phosphate (DAHP) to dehydroquinate (DHQ). The polypeptide is 3-dehydroquinate synthase (Helicobacter pylori (strain HPAG1)).